Reading from the N-terminus, the 360-residue chain is uncharacterized protein (360 aa).

The region spanning 4–235 is the ABC transporter domain; it reads LSLQHIQKIY…PANMFVSGFI (232 aa). 37-44 contributes to the ATP binding site; that stretch reads GPSGCGKS.

Belongs to the ABC transporter superfamily.

This is an uncharacterized protein from Escherichia coli (strain K12).